A 463-amino-acid chain; its full sequence is Steroidogenic factor 1 (463 aa).

Positions 10 to 85 (DELCPVCGDK…VGMRLEAVRA (76 aa)) form a DNA-binding region, nuclear receptor. The NR C4-type zinc finger occupies 13–33 (CPVCGDKVSGYHYGLLTCESC). K34, K38, and K72 each carry N6-acetyllysine. The segment at 49-73 (CTESQNCKIDKTQRKRCPYCRFQKC) adopts an NR C4-type zinc-finger fold. Residue K119 forms a Glycyl lysine isopeptide (Lys-Gly) (interchain with G-Cter in SUMO) linkage. The disordered stretch occupies residues 119–160 (KLETGPSMGPPPQTDYPLAPALHPGAKGLAPAPPAGPPGDYE). Positions 135-148 (PLAPALHPGAKGLA) are enriched in low complexity. A Glycyl lysine isopeptide (Lys-Gly) (interchain with G-Cter in SUMO) cross-link involves residue K193. Residues 197 to 216 (PEPYASPHEPAPPYGYPEPY) are disordered. Position 202 is a phosphoserine; by CDK7 (S202). The span at 205–216 (EPAPPYGYPEPY) shows a compositional bias: pro residues. Residues 224–461 (GVPELILKLL…NLLIEMLHAK (238 aa)) enclose the NR LBD domain. A 1,2-diacyl-sn-glycero-3-phosphocholine is bound by residues G343, Y438, and K442.

This sequence belongs to the nuclear hormone receptor family. NR5 subfamily. In terms of assembly, binds DNA as a monomer. Part of a complex consisting of SFPQ, NONO and NR5A1. Interacts with NR0B2, NCOA2 and PPARGC1A. Interacts with DGKQ and CDK7. Binds to and activated by HIPK3. Post-translationally, acetylation stimulates the transcriptional activity. Sumoylation reduces CDK7-mediated phosphorylation on Ser-202. In terms of processing, phosphorylated on Ser-202 by CDK7. This phosphorylation promotes transcriptional activity. As to expression, expressed in the pre-granulosa and Sertoli cells of the ovary and testis, respectively. In the testis it is also present in the interstitial cells. In the adult ovary it is expressed in the interstitial gland, and in the granulosa cells and theca interna of small to medium-sized antral follicles, but is not expressed in large antral follicles.

The protein localises to the nucleus. Transcriptional activator. Seems to be essential for sexual differentiation and formation of the primary steroidogenic tissues. Binds to the Ad4 site found in the promoter region of steroidogenic P450 genes such as CYP11A, CYP11B and CYP21B. Also regulates the AMH/Muellerian inhibiting substance gene as well as the AHCH and STAR genes. 5'-YCAAGGYC-3' and 5'-RRAGGTCA-3' are the consensus sequences for the recognition by NR5A1. The SFPQ-NONO-NR5A1 complex binds to the CYP17 promoter and regulates basal and cAMP-dependent transcriptional activity. Binds phosphatidylcholine and phospholipids with a phosphatidylinositol (PI) headgroup, in particular PI(3,4)P2 and PI(3,4,5)P3. Activated by the phosphorylation of NR5A1 by HIPK3 leading to increased steroidogenic gene expression upon cAMP signaling pathway stimulation. This Notamacropus eugenii (Tammar wallaby) protein is Steroidogenic factor 1 (NR5A1).